Reading from the N-terminus, the 301-residue chain is Homoserine O-acetyltransferase (301 aa).

The active-site Acyl-thioester intermediate is cysteine 142. Residues lysine 163 and serine 192 each coordinate substrate. The active-site Proton acceptor is histidine 235. Residue glutamate 237 is part of the active site. Arginine 249 lines the substrate pocket.

It belongs to the MetA family.

The protein resides in the cytoplasm. The catalysed reaction is L-homoserine + acetyl-CoA = O-acetyl-L-homoserine + CoA. It functions in the pathway amino-acid biosynthesis; L-methionine biosynthesis via de novo pathway; O-acetyl-L-homoserine from L-homoserine: step 1/1. Transfers an acetyl group from acetyl-CoA to L-homoserine, forming acetyl-L-homoserine. The polypeptide is Homoserine O-acetyltransferase (Bacillus cereus (strain AH187)).